The following is a 359-amino-acid chain: Norspermidine sensor (359 aa).

An N-terminal signal peptide occupies residues 1–33 (MTNFCNEWVSYSQMIKRFLSLMVLNTVCYQASA).

The protein belongs to the bacterial solute-binding protein PotD/PotF family.

The protein resides in the periplasm. Its function is as follows. Acts as a sensor of norspermidine and enhances biofilm formation. When complexed to norspermidine, could interact with the periplasmic portion of MbaA to regulate its enzymatic activity. This chain is Norspermidine sensor (nspS), found in Vibrio cholerae serotype O1 (strain ATCC 39315 / El Tor Inaba N16961).